The following is a 186-amino-acid chain: MKPVLVLAILAVLFLRLADSVPRPLDVVVSEIRSAHFRVEENQCWFHMGMLHYKGRMSGNFTEKHFVSVGIVSQSYMDRLQVSGEQYHHDERGAYFEWNIGGHPVPHTVDMVDITLSTRWGDPKKYAACVPQVRMDYSSQTINWYLQRSIRDDNWGLLFRTLLVYLFSLVVLVLLTVGVSARLRFI.

A signal peptide spans 1–20; it reads MKPVLVLAILAVLFLRLADS. The Lumenal portion of the chain corresponds to 21–160; sequence VPRPLDVVVS…RDDNWGLLFR (140 aa). Cys44 and Cys129 form a disulfide bridge. Asn60 carries N-linked (GlcNAc...) asparagine; by host glycosylation. The helical transmembrane segment at 161–181 threads the bilayer; it reads TLLVYLFSLVVLVLLTVGVSA. The Cytoplasmic portion of the chain corresponds to 182–186; it reads RLRFI.

Belongs to the cytomegalovirus US2 family. As to quaternary structure, monomer. Post-translationally, the signal sequence is not cleaved. In terms of processing, N-glycosylated; mostly exists in a high-mannose form.

The protein resides in the host endoplasmic reticulum membrane. Retains, but does not degrade MHC class I heterodimers in the endoplasmic reticulum during the immediate-early period of virus infection, thereby impairing their transport and maturation. Forms a complex with beta-2-microglobulin-associated class I heavy chains, which accumulate in the ER. In consequence, infected cells are masked for immune recognition by cytotoxic T-lymphocytes. In Homo sapiens (Human), this protein is Membrane glycoprotein US3 (US3).